Consider the following 106-residue polypeptide: ATP-dependent Clp protease adapter protein ClpS (106 aa).

This sequence belongs to the ClpS family. As to quaternary structure, binds to the N-terminal domain of the chaperone ClpA.

In terms of biological role, involved in the modulation of the specificity of the ClpAP-mediated ATP-dependent protein degradation. This Methylococcus capsulatus (strain ATCC 33009 / NCIMB 11132 / Bath) protein is ATP-dependent Clp protease adapter protein ClpS.